The primary structure comprises 428 residues: Glutamyl-tRNA reductase (428 aa).

Residues 49 to 52 (TCNR), Ser-107, 112 to 114 (EPQ), and Gln-118 each bind substrate. Cys-50 serves as the catalytic Nucleophile. 187 to 192 (GAGETI) contacts NADP(+).

This sequence belongs to the glutamyl-tRNA reductase family. Homodimer.

The enzyme catalyses (S)-4-amino-5-oxopentanoate + tRNA(Glu) + NADP(+) = L-glutamyl-tRNA(Glu) + NADPH + H(+). The protein operates within porphyrin-containing compound metabolism; protoporphyrin-IX biosynthesis; 5-aminolevulinate from L-glutamyl-tRNA(Glu): step 1/2. In terms of biological role, catalyzes the NADPH-dependent reduction of glutamyl-tRNA(Glu) to glutamate 1-semialdehyde (GSA). The sequence is that of Glutamyl-tRNA reductase from Pseudomonas fluorescens (strain Pf0-1).